A 362-amino-acid chain; its full sequence is Phosphoserine aminotransferase (362 aa).

Residues Ser-9 and Arg-42 each coordinate L-glutamate. Pyridoxal 5'-phosphate-binding positions include 76 to 77, Trp-102, Thr-153, Asp-174, and Gln-197; that span reads GR. Residue Lys-198 is modified to N6-(pyridoxal phosphate)lysine. 239–240 serves as a coordination point for pyridoxal 5'-phosphate; the sequence is NT.

Belongs to the class-V pyridoxal-phosphate-dependent aminotransferase family. SerC subfamily. Homodimer. Pyridoxal 5'-phosphate serves as cofactor.

It localises to the cytoplasm. It carries out the reaction O-phospho-L-serine + 2-oxoglutarate = 3-phosphooxypyruvate + L-glutamate. It catalyses the reaction 4-(phosphooxy)-L-threonine + 2-oxoglutarate = (R)-3-hydroxy-2-oxo-4-phosphooxybutanoate + L-glutamate. The protein operates within amino-acid biosynthesis; L-serine biosynthesis; L-serine from 3-phospho-D-glycerate: step 2/3. It functions in the pathway cofactor biosynthesis; pyridoxine 5'-phosphate biosynthesis; pyridoxine 5'-phosphate from D-erythrose 4-phosphate: step 3/5. Functionally, catalyzes the reversible conversion of 3-phosphohydroxypyruvate to phosphoserine and of 3-hydroxy-2-oxo-4-phosphonooxybutanoate to phosphohydroxythreonine. In Escherichia coli O6:K15:H31 (strain 536 / UPEC), this protein is Phosphoserine aminotransferase.